The following is a 333-amino-acid chain: Casein kinase II subunit alpha-2 (333 aa).

A Protein kinase domain is found at 34 to 319 (YEVVRKVGRG…AREAMAHPYF (286 aa)). ATP contacts are provided by residues 40–48 (VGRGKYSEV) and Lys63. The active-site Proton acceptor is the Asp151.

Belongs to the protein kinase superfamily. Ser/Thr protein kinase family. CK2 subfamily. In terms of assembly, monomer. In terms of processing, autophosphorylated.

It localises to the cytoplasm. The catalysed reaction is L-seryl-[protein] + ATP = O-phospho-L-seryl-[protein] + ADP + H(+). The enzyme catalyses L-threonyl-[protein] + ATP = O-phospho-L-threonyl-[protein] + ADP + H(+). Its function is as follows. Casein kinases are operationally defined by their preferential utilization of acidic proteins such as caseins as substrates. It can phosphorylate a large number of proteins. Involved in photoperiod sensitivity (PS). Increases days-to-heading under natural day (ND) and long day (LD) conditions, but not under short day (SD) conditions. The polypeptide is Casein kinase II subunit alpha-2 (Oryza sativa subsp. indica (Rice)).